We begin with the raw amino-acid sequence, 331 residues long: Germ cell-specific gene 1-like protein (331 aa).

Over 1 to 8 (MKTSRRGR) the chain is Cytoplasmic. A helical membrane pass occupies residues 9-29 (ALLAVALNLLALLFATTAFLT). Over 30-132 (THWCQGTQRV…FIDLAPASEK (103 aa)) the chain is Extracellular. The chain crosses the membrane as a helical span at residues 133 to 153 (GVLWLSVVSEVLYILLLVVGF). The Cytoplasmic portion of the chain corresponds to 154 to 173 (SLMCLELFHSSNVIDGLKLN). A helical transmembrane segment spans residues 174-194 (AFAAVFTVLSGLLGMVAHMMY). Residues 195–217 (TQVFQVTVSLGPEDWRPHSWDYG) are Extracellular-facing. Residues 218–238 (WSFCLAWGSFTCCMAASVTTL) form a helical membrane-spanning segment. Residues 239–331 (NSYTKTVIEF…RQCWVLGHWV (93 aa)) are Cytoplasmic-facing.

This sequence belongs to the GSG1 family. Component of the inner core of AMPAR complex. AMPAR complex consists of an inner core made of 4 pore-forming GluA/GRIA proteins (GRIA1, GRIA2, GRIA3 and GRIA4) and 4 major auxiliary subunits arranged in a twofold symmetry. One of the two pairs of distinct binding sites is occupied either by CNIH2, CNIH3 or CACNG2, CACNG3. The other harbors CACNG2, CACNG3, CACNG4, CACNG8 or GSG1L. This inner core of AMPAR complex is complemented by outer core constituents binding directly to the GluA/GRIA proteins at sites distinct from the interaction sites of the inner core constituents. Outer core constituents include at least PRRT1, PRRT2, CKAMP44/SHISA9, FRRS1L and NRN1. The proteins of the inner and outer core serve as a platform for other, more peripherally associated AMPAR constituents. Alone or in combination, these auxiliary subunits control the gating and pharmacology of the AMPAR complex and profoundly impact their biogenesis and protein processing.

The protein resides in the cell membrane. It is found in the synapse. In terms of biological role, as a component of the inner core of AMPAR complex, modifies AMPA receptor (AMPAR) gating. This chain is Germ cell-specific gene 1-like protein (GSG1L), found in Homo sapiens (Human).